A 479-amino-acid polypeptide reads, in one-letter code: Aspartyl/glutamyl-tRNA(Asn/Gln) amidotransferase subunit B (479 aa).

Belongs to the GatB/GatE family. GatB subfamily. As to quaternary structure, heterotrimer of A, B and C subunits.

The catalysed reaction is L-glutamyl-tRNA(Gln) + L-glutamine + ATP + H2O = L-glutaminyl-tRNA(Gln) + L-glutamate + ADP + phosphate + H(+). The enzyme catalyses L-aspartyl-tRNA(Asn) + L-glutamine + ATP + H2O = L-asparaginyl-tRNA(Asn) + L-glutamate + ADP + phosphate + 2 H(+). Functionally, allows the formation of correctly charged Asn-tRNA(Asn) or Gln-tRNA(Gln) through the transamidation of misacylated Asp-tRNA(Asn) or Glu-tRNA(Gln) in organisms which lack either or both of asparaginyl-tRNA or glutaminyl-tRNA synthetases. The reaction takes place in the presence of glutamine and ATP through an activated phospho-Asp-tRNA(Asn) or phospho-Glu-tRNA(Gln). The protein is Aspartyl/glutamyl-tRNA(Asn/Gln) amidotransferase subunit B of Streptococcus uberis (strain ATCC BAA-854 / 0140J).